A 432-amino-acid chain; its full sequence is Amino-acid acetyltransferase (432 aa).

The N-acetyltransferase domain maps to 286-425; the sequence is ERVREAAIED…ASLYNYQRNS (140 aa).

The protein belongs to the acetyltransferase family. ArgA subfamily.

The protein resides in the cytoplasm. It catalyses the reaction L-glutamate + acetyl-CoA = N-acetyl-L-glutamate + CoA + H(+). It participates in amino-acid biosynthesis; L-arginine biosynthesis; N(2)-acetyl-L-ornithine from L-glutamate: step 1/4. This Pseudomonas fluorescens (strain ATCC BAA-477 / NRRL B-23932 / Pf-5) protein is Amino-acid acetyltransferase.